The primary structure comprises 154 residues: Lipoprotein signal peptidase (154 aa).

The next 4 helical transmembrane spans lie at 8-28 (AFFL…YWAL), 36-56 (IVVN…AFSF), 66-86 (WLFA…LLTK), and 88-108 (HHWL…GNLY). Active-site residues include Asp-118 and Asp-136. Residues 129–149 (WPVFNLADVAITLGVILMLIA) traverse the membrane as a helical segment.

It belongs to the peptidase A8 family.

It is found in the cell inner membrane. It carries out the reaction Release of signal peptides from bacterial membrane prolipoproteins. Hydrolyzes -Xaa-Yaa-Zaa-|-(S,diacylglyceryl)Cys-, in which Xaa is hydrophobic (preferably Leu), and Yaa (Ala or Ser) and Zaa (Gly or Ala) have small, neutral side chains.. Its pathway is protein modification; lipoprotein biosynthesis (signal peptide cleavage). This protein specifically catalyzes the removal of signal peptides from prolipoproteins. This is Lipoprotein signal peptidase from Dichelobacter nodosus (strain VCS1703A).